The chain runs to 92 residues: Protein S100-B (92 aa).

Serine 2 is subject to Blocked amino end (Ser); alternate. N-acetylserine; alternate is present on serine 2. 2 EF-hand domains span residues 13-48 (DVFH…LEEI) and 49-84 (KEQE…VTTA). Histidine 16 provides a ligand contact to Zn(2+). Positions 19, 22, and 24 each coordinate Ca(2+). Zn(2+) is bound at residue histidine 26. Residues lysine 27, glutamate 32, aspartate 62, aspartate 64, aspartate 66, glutamate 68, and glutamate 73 each coordinate Ca(2+). Residues histidine 86 and histidine 91 each contribute to the Zn(2+) site.

This sequence belongs to the S-100 family. In terms of assembly, dimer of either two alpha chains, or two beta chains, or one alpha and one beta chain. The S100B dimer binds two molecules of STK38. Interacts with CACYBP in a calcium-dependent manner. Interacts with ATAD3A; this interaction probably occurs in the cytosol prior to ATAD3A mitochondrial targeting. Interacts with S100A6. The S100B dimer interacts with two molecules of CAPZA1. Interacts with AGER. Interacts with PPP5C (via TPR repeats); the interaction is calcium-dependent and modulates PPP5C activity. Interacts with TPPP; this interaction inhibits TPPP dimerization. Interacts with isoform CLSTN3beta of CLSTN3; interaction promotes secretion. As to expression, although predominant among the water-soluble brain proteins, S100 is also found in a variety of other tissues.

It is found in the cytoplasm. The protein localises to the nucleus. The protein resides in the secreted. Functionally, small zinc- and- and calcium-binding protein that is highly expressed in astrocytes and constitutes one of the most abundant soluble proteins in brain. Weakly binds calcium but binds zinc very tightly-distinct binding sites with different affinities exist for both ions on each monomer. Physiological concentrations of potassium ion antagonize the binding of both divalent cations, especially affecting high-affinity calcium-binding sites. Acts as a neurotrophic factor that promotes astrocytosis and axonal proliferation. Involved in innervation of thermogenic adipose tissue by acting as an adipocyte-derived neurotrophic factor that promotes sympathetic innervation of adipose tissue. Binds to and initiates the activation of STK38 by releasing autoinhibitory intramolecular interactions within the kinase. Interaction with AGER after myocardial infarction may play a role in myocyte apoptosis by activating ERK1/2 and p53/TP53 signaling. Could assist ATAD3A cytoplasmic processing, preventing aggregation and favoring mitochondrial localization. May mediate calcium-dependent regulation on many physiological processes by interacting with other proteins, such as TPR-containing proteins, and modulating their activity. The polypeptide is Protein S100-B (Homo sapiens (Human)).